Reading from the N-terminus, the 895-residue chain is MTVKKETPMMEQYLSIKKRYPDTILFYRMGDFYEMFLDDALKAAPVLEIALTSRNKTQEDPIPMCGVPHRAADVYIAKLIESGLKVAVCEQMEDPRSAQGIVKREVVRVITPGMILNEDLLDKKSNNFLAALCICQGAAGLACMDISTGMFRTTQTVAVNGKVPLSLVDEALRIDAKELLLPASFKGDPTYSQLIKAFETIQISYVGNENFKLDSARERLKEKFRTRSLEGFGCEDLTAGTAAAGAILSYVQETQLRETDHVLTLERYELNTYLIIDDRSCRNLELLKNIQTSDKKGSLISVLDCTITAMGGRLLKAWIRYPLISMDGIEARLDAVAEAKENPGIRNSLRTHLKDVYDLERLGSKISMGHANPRDLTALKISLYKLPLLFKDLNQLSASLLQGHGIEDREKVSTELFELADLINQTIREDAPLALNEGGIICDGYSPELDEILEIARNGRSWIAKTGAKEKEKTGLSSLKIKFNKVFGYFIEVSKIQSQQVPDHYIRKQTLVNAERFITDELKEVESKVLNAQERRSSLEYALFCKVRESIVQRTPSIFKIAQFLAEVDVVLALATTAEENNYTRPALNKDQVLDIEDGRHPVVEKMVVGERYIPNSIRLDNTSDQVQIITGPNMAGKSTVLRQVALISLMAQMGSFVPAARADLCIIDRIFTRVGALDNLSLGQSTFMVEMEETANIVNNAKENSLVILDEIGRGTSTFDGMSIAWAVAEYLHDLDGKGVKTLFATHYHELTRLEKLKPRVKNFNIAVKEFNDNIIFLRRLVPGGTNKSYGIQVARLAGVPDAVITKAKQILASIEQSPDQVVTQDKKQVKKQTKNNHSARSGSRQQQMDLFAGHDYDEIIKVLDQTDISTMTPIDALNLIHELKQKIRSKAMI.

Residue 632-639 (GPNMAGKS) participates in ATP binding. The interval 824-849 (VTQDKKQVKKQTKNNHSARSGSRQQQ) is disordered. Positions 837–849 (NNHSARSGSRQQQ) are enriched in polar residues.

It belongs to the DNA mismatch repair MutS family.

This protein is involved in the repair of mismatches in DNA. It is possible that it carries out the mismatch recognition step. This protein has a weak ATPase activity. This chain is DNA mismatch repair protein MutS, found in Desulforapulum autotrophicum (strain ATCC 43914 / DSM 3382 / VKM B-1955 / HRM2) (Desulfobacterium autotrophicum).